The primary structure comprises 1016 residues: Vacuolar membrane protease (1016 aa).

The tract at residues Met1 to Ser36 is disordered. At Met1 to Lys57 the chain is on the cytoplasmic side. A helical transmembrane segment spans residues Thr58 to Ser78. At Asn79–Leu408 the chain is on the vacuolar side. Asn147 and Asn177 each carry an N-linked (GlcNAc...) asparagine glycan. Zn(2+)-binding residues include His191 and Asp203. The active-site Proton acceptor is the Glu238. Residues Glu239, Glu264, and His337 each coordinate Zn(2+). The helical transmembrane segment at Ile409–Phe429 threads the bilayer. Topologically, residues Asn430 to Gly438 are cytoplasmic. The helical transmembrane segment at Phe439–Ile459 threads the bilayer. Residues Thr460–Ser481 are Vacuolar-facing. A glycan (N-linked (GlcNAc...) asparagine) is linked at Asn473. Residues Thr482 to Phe502 traverse the membrane as a helical segment. Residues Lys503–Asp511 lie on the Cytoplasmic side of the membrane. Residues Glu512–Thr532 form a helical membrane-spanning segment. Residues Asn533–Glu547 are Vacuolar-facing. A helical membrane pass occupies residues Phe548–Trp568. Residues Ser569–Tyr646 are Cytoplasmic-facing. Residues Tyr598–Ser622 form a disordered region. Over residues Ser612–Ser622 the composition is skewed to low complexity. The helical transmembrane segment at Val647–Gly667 threads the bilayer. Over Leu668–Leu681 the chain is Vacuolar. N-linked (GlcNAc...) asparagine glycosylation is present at Asn669. Residues Ile682–Phe702 form a helical membrane-spanning segment. Topologically, residues Lys703–Arg706 are cytoplasmic. The chain crosses the membrane as a helical span at residues Leu707–Ser727. At Pro728–Ile1016 the chain is on the vacuolar side. N-linked (GlcNAc...) asparagine glycosylation is found at Asn778, Asn821, Asn850, Asn875, and Asn977.

Belongs to the peptidase M28 family. Zn(2+) serves as cofactor.

The protein resides in the vacuole membrane. May be involved in vacuolar sorting and osmoregulation. The protein is Vacuolar membrane protease of Debaryomyces hansenii (strain ATCC 36239 / CBS 767 / BCRC 21394 / JCM 1990 / NBRC 0083 / IGC 2968) (Yeast).